Consider the following 659-residue polypeptide: MVLSTEENRSVDLVNLPSVPLPDGEAGVGENNKDSLNNLCSQYEEKVRPCIDLIDSLRALGVEQDLALPAIAVIGDQSSGKSSVLEALSGVALPRGSGIVTRCPLVLKLKKLNQGEEWKGKVTYDDIEVELSDPSEVEEAINTGQNHIAGVGLGISDKLISLDVSSPHVPDLTLIDLPGITRVAVGNQPADIGRQIKRLITNYIQKQETINLVVVPSNVDIATTEALSMAQKVDPDGDRTIGILTKPDLVDRGTEDKVVDVVRNLVCHLKKGYMIVKCRGQQDIQEQLSLAEALQKEQVFFKEHPQFRALLEDGKATVPCLAERLTMELISHICKSLPLLENQIKESHQSTSEELQKYGADIPEDENEKTLFLIEKINAFNQDITAIVEGEEIVREKECRLFTKLRKEFFLWSEEIERNFQKGSDALYKEVYTFEMQYRGRELPGFVNYKTFENIIRRQIKTLEEPAMEMLHKVTEIVRAAFTTVSEKNFSEFFNLHRTTKSKLEDIRLEQETEAEKSIRLHFQMEQIIYCQDQIYRKALQKVREEEAEEEERKHGKSRSSQSKNLQTSSMDEIFQHLNAYRQEAHNRISSHIPLIIQYFILKMFAEKLQKGMLQLLQDKDSCSWLLKEHSDTSEKRRFLKERLARLAQAQRRLAKFPG.

The Dynamin-type G domain occupies 65–338 (DLALPAIAVI…LISHICKSLP (274 aa)). The tract at residues 75 to 82 (GDQSSGKS) is G1 motif. 75–82 (GDQSSGKS) contacts GTP. Residues 100–102 (VTR) form a G2 motif region. Residues 176–179 (DLPG) are G3 motif. GTP contacts are provided by residues 176-180 (DLPGI) and 245-248 (TKPD). The tract at residues 245 to 248 (TKPD) is G4 motif. Positions 277 to 280 (KCRG) are G5 motif. The segment at 547-567 (EAEEEERKHGKSRSSQSKNLQ) is disordered. In terms of domain architecture, GED spans 571-659 (MDEIFQHLNA…AQRRLAKFPG (89 aa)).

It belongs to the TRAFAC class dynamin-like GTPase superfamily. Dynamin/Fzo/YdjA family.

The protein localises to the cytoplasm. Interferon-induced dynamin-like GTPase with antiviral activity against vesicular stomatitis virus (VSV). The polypeptide is Interferon-induced GTP-binding protein Mx2 (Mx2) (Rattus norvegicus (Rat)).